The sequence spans 197 residues: Probable NADPH:quinone oxidoreductase 1 (197 aa).

It belongs to the SsuE family. As to quaternary structure, homotetramer. The cofactor is FMN.

It catalyses the reaction a quinone + NADH + H(+) = a quinol + NAD(+). The catalysed reaction is a quinone + NADPH + H(+) = a quinol + NADP(+). In terms of biological role, the enzyme apparently serves as a quinone reductase in connection with conjugation reactions of hydroquinones involved in detoxification pathways. This Oryza sativa subsp. japonica (Rice) protein is Probable NADPH:quinone oxidoreductase 1.